An 869-amino-acid chain; its full sequence is Probable beta-glucosidase F (869 aa).

The first 19 residues, 1–19 (MRVLSAIALVASLASSALS), serve as a signal peptide directing secretion. Residues Asn77 and Asn261 are each glycosylated (N-linked (GlcNAc...) asparagine). Asp289 is a catalytic residue. Residues Asn332, Asn364, Asn399, and Asn478 are each glycosylated (N-linked (GlcNAc...) asparagine). Positions 677–697 (STYPPTRPPKGPTPTYPTAIP) are disordered. The segment covering 681-691 (PTRPPKGPTPT) has biased composition (pro residues). Asn728 carries an N-linked (GlcNAc...) asparagine glycan.

It belongs to the glycosyl hydrolase 3 family.

The protein resides in the secreted. It carries out the reaction Hydrolysis of terminal, non-reducing beta-D-glucosyl residues with release of beta-D-glucose.. It functions in the pathway glycan metabolism; cellulose degradation. Its function is as follows. Beta-glucosidases are one of a number of cellulolytic enzymes involved in the degradation of cellulosic biomass. Catalyzes the last step releasing glucose from the inhibitory cellobiose. This chain is Probable beta-glucosidase F (bglF), found in Aspergillus fumigatus (strain CBS 144.89 / FGSC A1163 / CEA10) (Neosartorya fumigata).